A 387-amino-acid chain; its full sequence is Lipid-A-disaccharide synthase (387 aa).

This sequence belongs to the LpxB family.

The enzyme catalyses a lipid X + a UDP-2-N,3-O-bis[(3R)-3-hydroxyacyl]-alpha-D-glucosamine = a lipid A disaccharide + UDP + H(+). It functions in the pathway bacterial outer membrane biogenesis; LPS lipid A biosynthesis. Condensation of UDP-2,3-diacylglucosamine and 2,3-diacylglucosamine-1-phosphate to form lipid A disaccharide, a precursor of lipid A, a phosphorylated glycolipid that anchors the lipopolysaccharide to the outer membrane of the cell. The polypeptide is Lipid-A-disaccharide synthase (Glaesserella parasuis serovar 5 (strain SH0165) (Haemophilus parasuis)).